Here is a 347-residue protein sequence, read N- to C-terminus: Phosphoribosylformylglycinamidine cyclo-ligase (347 aa).

The protein belongs to the AIR synthase family.

The protein resides in the cytoplasm. It carries out the reaction 2-formamido-N(1)-(5-O-phospho-beta-D-ribosyl)acetamidine + ATP = 5-amino-1-(5-phospho-beta-D-ribosyl)imidazole + ADP + phosphate + H(+). Its pathway is purine metabolism; IMP biosynthesis via de novo pathway; 5-amino-1-(5-phospho-D-ribosyl)imidazole from N(2)-formyl-N(1)-(5-phospho-D-ribosyl)glycinamide: step 2/2. The sequence is that of Phosphoribosylformylglycinamidine cyclo-ligase from Alkaliphilus metalliredigens (strain QYMF).